Here is a 390-residue protein sequence, read N- to C-terminus: 3-ketoacyl-CoA thiolase (390 aa).

Residue cysteine 95 is the Acyl-thioester intermediate of the active site. Residues histidine 346 and cysteine 376 each act as proton acceptor in the active site.

This sequence belongs to the thiolase-like superfamily. Thiolase family. Heterotetramer of two alpha chains (FadB) and two beta chains (FadA).

Its subcellular location is the cytoplasm. The enzyme catalyses an acyl-CoA + acetyl-CoA = a 3-oxoacyl-CoA + CoA. The protein operates within lipid metabolism; fatty acid beta-oxidation. Its function is as follows. Catalyzes the final step of fatty acid oxidation in which acetyl-CoA is released and the CoA ester of a fatty acid two carbons shorter is formed. This is 3-ketoacyl-CoA thiolase from Psychrobacter sp. (strain PRwf-1).